Reading from the N-terminus, the 40-residue chain is Ribosome-inactivating protein saporin-1 (40 aa).

It belongs to the ribosome-inactivating protein family. Type 1 RIP subfamily.

The enzyme catalyses Endohydrolysis of the N-glycosidic bond at one specific adenosine on the 28S rRNA.. Functionally, ribosome-inactivating protein of type 1, inhibits protein synthesis in animal cells. The sequence is that of Ribosome-inactivating protein saporin-1 (SAP1) from Saponaria officinalis (Common soapwort).